Consider the following 401-residue polypeptide: Argininosuccinate synthase (401 aa).

ATP is bound at residue Ala-9 to Ser-17. Tyr-86 lines the L-citrulline pocket. Residue Gly-116 participates in ATP binding. L-aspartate is bound by residues Thr-118, Asn-122, and Asp-123. Residue Asn-122 participates in L-citrulline binding. L-citrulline contacts are provided by Arg-126, Ser-174, Ser-183, Glu-259, and Tyr-271.

Belongs to the argininosuccinate synthase family. Type 1 subfamily. As to quaternary structure, homotetramer.

Its subcellular location is the cytoplasm. The enzyme catalyses L-citrulline + L-aspartate + ATP = 2-(N(omega)-L-arginino)succinate + AMP + diphosphate + H(+). The protein operates within amino-acid biosynthesis; L-arginine biosynthesis; L-arginine from L-ornithine and carbamoyl phosphate: step 2/3. This Bacillus cereus (strain B4264) protein is Argininosuccinate synthase.